The following is a 98-amino-acid chain: Keratin-associated protein 3-3 (98 aa).

Alanine 2 bears the N-acetylalanine mark. 3 repeat units span residues 3 to 7, 8 to 12, and 47 to 51. Positions 3–59 are 3 X 5 AA repeats of C-C-X(3); sequence CCAPLCCSARTSPATTICSSDKFCRCGVCLPSTCPHTVWLLEPTCCDNCPPPCHIPQ.

The protein belongs to the KRTAP type 3 family. Interacts with hair keratins.

Its function is as follows. In the hair cortex, hair keratin intermediate filaments are embedded in an interfilamentous matrix, consisting of hair keratin-associated proteins (KRTAP), which are essential for the formation of a rigid and resistant hair shaft through their extensive disulfide bond cross-linking with abundant cysteine residues of hair keratins. The matrix proteins include the high-sulfur and high-glycine-tyrosine keratins. This chain is Keratin-associated protein 3-3, found in Bos taurus (Bovine).